The following is a 46-amino-acid chain: Esculentin-1GRa (46 aa).

As to expression, expressed by the skin glands.

It is found in the secreted. Antimicrobial peptide active against the Gram-positive bacterium S.aureus (MIC=12.5 uM) and against the Gram-negative bacterium E.coli (MIC=6 uM). Has no antifungal activity against C.albicans. Shows hemolytic activity against human erythrocytes only at high concentrations (LC(50)=210 uM). This chain is Esculentin-1GRa, found in Odorrana grahami (Yunnanfu frog).